Here is a 642-residue protein sequence, read N- to C-terminus: Serotransferrin (642 aa).

Transferrin-like domains lie at Gly-1 to Lys-280 and Ile-290 to Gln-621. Asp-25 and Tyr-54 together coordinate Fe(3+). 3 disulfide bridges follow: Cys-77-Cys-158, Cys-121-Cys-137, and Cys-186-Cys-200. The hydrogencarbonate site is built by Thr-79, Lys-83, Ala-85, and Gly-86. Fe(3+) is bound at residue Tyr-152. Residue His-208 participates in Fe(3+) binding. Intrachain disulfides connect Cys-293–Cys-329 and Cys-303–Cys-320. Residue Asp-344 participates in Fe(3+) binding. 7 disulfides stabilise this stretch: Cys-354–Cys-633, Cys-369–Cys-594, Cys-402–Cys-480, Cys-426–Cys-622, Cys-436–Cys-450, Cys-447–Cys-463, and Cys-520–Cys-535. N-linked (GlcNAc...) asparagine glycosylation occurs at Asn-365. Position 379 (Tyr-379) interacts with Fe(3+). The hydrogencarbonate site is built by Thr-404, Arg-408, Ala-410, and Gly-411. Residue Tyr-474 participates in Fe(3+) binding. His-543 is a Fe(3+) binding site.

It belongs to the transferrin family. Monomer. In terms of tissue distribution, brain and liver; to a lesser extent in kidney and heart.

Its subcellular location is the secreted. In terms of biological role, transferrins are iron binding transport proteins which can bind two Fe(3+) ions in association with the binding of an anion, usually bicarbonate. In Gadus morhua (Atlantic cod), this protein is Serotransferrin (tf).